Here is a 351-residue protein sequence, read N- to C-terminus: MWIVAGVCSGVAILLSFYLIYKHLRNYTNPELQKYIVRILIMVPIYSVDSWLSLRFVELSLYFDVVRDTYEAYVLYCFFSLIVAYIERDFDLVELLHSKEPLPHPFPLTCLPKIKLDRGFLTNCKRFVLQFVFIKPIVAIISLVLETQHKYGEGKFQVGTGYVWLTVVENISVGLSLYFLVLYYKAMEEELKPFKPLGKFLCIKSILFFSFWQSIAISFLVYFGVISPIGSWSVDNISSALQDFITCVEMVILAICHHFFFNYQEFRDPHKVPFIYDKTTKTFFNNPKTNITPIIKNFFTNVTNISDVISDTRETFILPLLSPDHHHNHPTTKKKDEESNLLEPEDKDIII.

The helical transmembrane segment at 1 to 21 (MWIVAGVCSGVAILLSFYLIY) threads the bilayer. N26 is a glycosylation site (N-linked (GlcNAc...) asparagine). Transmembrane regions (helical) follow at residues 39-59 (ILIMVPIYSVDSWLSLRFVEL), 73-93 (YVLYCFFSLIVAYIERDFDLV), 127-147 (FVLQFVFIKPIVAIISLVLET), 162-182 (YVWLTVVENISVGLSLYFLVL), and 206-226 (ILFFSFWQSIAISFLVYFGVI). An N-linked (GlcNAc...) asparagine glycan is attached at N236. The helical transmembrane segment at 241-261 (LQDFITCVEMVILAICHHFFF) threads the bilayer. N-linked (GlcNAc...) asparagine glycans are attached at residues N301 and N304. Residues 327-351 (HNHPTTKKKDEESNLLEPEDKDIII) form a disordered region. Residues 339–351 (SNLLEPEDKDIII) are compositionally biased toward acidic residues.

The protein belongs to the TMEM184 family.

Its subcellular location is the cell membrane. In terms of biological role, probable transporter. The chain is Transmembrane protein 184 homolog DDB_G0279555 (tmem184C) from Dictyostelium discoideum (Social amoeba).